The sequence spans 345 residues: Protein Tob1 (345 aa).

Positions arginine 22–lysine 39 match the Bipartite nuclear localization signal motif. The tract at residues valine 82 to valine 92 is important for nuclear localization. A compositionally biased stretch (low complexity) spans aspartate 144–serine 160. A disordered region spans residues aspartate 144 to serine 171. A required for interaction with CPEB3 region spans residues alanine 161–lysine 218. A Phosphothreonine modification is found at threonine 204. The Nuclear export signal motif lies at methionine 226–leucine 234. The interval glycine 231–leucine 267 is disordered. Residues glutamine 237 to proline 246 are compositionally biased toward low complexity. The span at alanine 247–glutamine 257 shows a compositional bias: pro residues.

Belongs to the BTG family. Interacts with ERBB2. Interacts with CNOT7. Interacts with CPEB3 (via C-terminal RNA-binding region); recruits CNOT7 to CPEB3 to form a ternary complex required for mRNA deadenylation and decay. Interacts with CNOT8. Interacts with CPEB4. Post-translationally, phosphorylated on Ser and Thr residues. Ubiquitous.

The protein localises to the cytoplasm. It is found in the nucleus. Its function is as follows. Anti-proliferative protein; the function is mediated by association with deadenylase subunits of the CCR4-NOT complex. Mediates CPEB3-accelerated mRNA deadenylation by binding to CPEB3 and recruiting CNOT7 which leads to target mRNA deadenylation and decay. The polypeptide is Protein Tob1 (TOB1) (Homo sapiens (Human)).